Reading from the N-terminus, the 873-residue chain is Alanine--tRNA ligase (873 aa).

Positions 562, 566, 666, and 670 each coordinate Zn(2+).

It belongs to the class-II aminoacyl-tRNA synthetase family. Zn(2+) serves as cofactor.

The protein localises to the cytoplasm. The catalysed reaction is tRNA(Ala) + L-alanine + ATP = L-alanyl-tRNA(Ala) + AMP + diphosphate. Functionally, catalyzes the attachment of alanine to tRNA(Ala) in a two-step reaction: alanine is first activated by ATP to form Ala-AMP and then transferred to the acceptor end of tRNA(Ala). Also edits incorrectly charged Ser-tRNA(Ala) and Gly-tRNA(Ala) via its editing domain. This is Alanine--tRNA ligase from Dichelobacter nodosus (strain VCS1703A).